Consider the following 229-residue polypeptide: Heptaprenylglyceryl phosphate synthase (229 aa).

A sn-glycerol 1-phosphate-binding site is contributed by Lys-12. Mg(2+) is bound by residues Asp-14 and Ser-40. Sn-glycerol 1-phosphate-binding positions include 159–164 (YLEYSG), Gly-189, and 209–210 (GN).

It belongs to the GGGP/HepGP synthase family. Group I subfamily. In terms of assembly, homodimer. The cofactor is Mg(2+).

It catalyses the reaction sn-glycerol 1-phosphate + all-trans-heptaprenyl diphosphate = 3-heptaprenyl-sn-glycero-1-phosphate + diphosphate. Its pathway is membrane lipid metabolism; glycerophospholipid metabolism. Its function is as follows. Prenyltransferase that catalyzes in vivo the transfer of the heptaprenyl moiety of heptaprenyl pyrophosphate (HepPP; 35 carbon atoms) to the C3 hydroxyl of sn-glycerol-1-phosphate (G1P), producing heptaprenylglyceryl phosphate (HepGP). This reaction is an ether-bond-formation step in the biosynthesis of archaea-type G1P-based membrane lipids found in Bacillales. In Bacillus cytotoxicus (strain DSM 22905 / CIP 110041 / 391-98 / NVH 391-98), this protein is Heptaprenylglyceryl phosphate synthase.